The sequence spans 410 residues: MHLQRALVVLALLNLATISLSLSTCTTLDFGHIKKKRVEAIRGQILSKLRLTSPPEPSVMTHVPYQVLALYNSTRELLEEMHGEREEGCTQETSESEYYAKEIHKFDMIQGLAEHNELAVCPKGITSKVFRFNVSSVEKNGTNLFRAEFRVLRVPNPSSKRTEQRIELFQILRPDEHIAKQRYIGGKNLPTRGTAEWLSFDVTDTVREWLLRRESNLGLEISIHCPCHTFQPNGDILENVHEVMEIKFKGVDNEDDHGRGDLGRLKKQKDHHNPHLILMMIPPHRLDSPGQGSQRKKRALDTNYCFRNLEENCCVRPLYIDFRQDLGWKWVHEPKGYYANFCSGPCPYLRSADTTHSTVLGLYNTLNPEASASPCCVPQDLEPLTILYYVGRTPKVEQLSNMVVKSCKCS.

Positions 1–23 are cleaved as a signal peptide; it reads MHLQRALVVLALLNLATISLSLS. 3 N-linked (GlcNAc...) asparagine glycosylation sites follow: Asn72, Asn133, and Asn140. The Cell attachment site motif lies at 259-261; that stretch reads RGD. Gln291 bears the N5-methylglutamine mark. 4 disulfides stabilise this stretch: Cys305-Cys314, Cys313-Cys376, Cys342-Cys407, and Cys346-Cys409.

Belongs to the TGF-beta family. In terms of assembly, interacts with ASPN. Latency-associated peptide: Homodimer; disulfide-linked. Latency-associated peptide: Interacts with Transforming growth factor beta-3 (TGF-beta-3) chain; interaction is non-covalent and maintains (TGF-beta-3) in a latent state. Latency-associated peptide: Interacts with LRRC32/GARP; leading to regulate activation of TGF-beta-3 and promote epithelial fusion during palate development. Latency-associated peptide: Interacts (via cell attachment site) with integrins, leading to release of the active TGF-beta-3. Transforming growth factor beta-3: Homodimer; disulfide-linked. Transforming growth factor beta-3: Interacts with TGF-beta receptors (TGFBR1 and TGFBR2), leading to signal transduction. Transforming growth factor beta-3 proprotein: The precursor proprotein is cleaved in the Golgi apparatus to form Transforming growth factor beta-3 (TGF-beta-3) and Latency-associated peptide (LAP) chains, which remain non-covalently linked, rendering TGF-beta-3 inactive. Post-translationally, methylated at Gln-291 by N6AMT1. In terms of tissue distribution, expressed in mammary glands with a slight increase in expression prior to lactation and again increasing at the onset of involution, expression peaks at day 3 of involution.

The protein localises to the secreted. The protein resides in the extracellular space. Its subcellular location is the extracellular matrix. In terms of biological role, transforming growth factor beta-3 proprotein: Precursor of the Latency-associated peptide (LAP) and Transforming growth factor beta-3 (TGF-beta-3) chains, which constitute the regulatory and active subunit of TGF-beta-3, respectively. Required to maintain the Transforming growth factor beta-3 (TGF-beta-3) chain in a latent state during storage in extracellular matrix. Associates non-covalently with TGF-beta-3 and regulates its activation via interaction with 'milieu molecules', such as LTBP1 and LRRC32/GARP, that control activation of TGF-beta-3. Interaction with integrins results in distortion of the Latency-associated peptide chain and subsequent release of the active TGF-beta-3. Functionally, transforming growth factor beta-3: Multifunctional protein that regulates embryogenesis and cell differentiation and is required in various processes such as secondary palate development. Activation into mature form follows different steps: following cleavage of the proprotein in the Golgi apparatus, Latency-associated peptide (LAP) and Transforming growth factor beta-3 (TGF-beta-3) chains remain non-covalently linked rendering TGF-beta-3 inactive during storage in extracellular matrix. At the same time, LAP chain interacts with 'milieu molecules', such as LTBP1 and LRRC32/GARP that control activation of TGF-beta-3 and maintain it in a latent state during storage in extracellular milieus. TGF-beta-3 is released from LAP by integrins: integrin-binding results in distortion of the LAP chain and subsequent release of the active TGF-beta-3. Once activated following release of LAP, TGF-beta-3 acts by binding to TGF-beta receptors (TGFBR1 and TGFBR2), which transduce signal. The sequence is that of Transforming growth factor beta-3 proprotein from Mus musculus (Mouse).